The chain runs to 499 residues: FAD-dependent oxidoreductase domain-containing protein 1 (499 aa).

Residues 75–95 form a helical membrane-spanning segment; it reads ERADVVIVGGGVMGWSIAYWL.

FAD serves as cofactor.

Its subcellular location is the mitochondrion inner membrane. Required for the assembly of the mitochondrial membrane respiratory chain NADH dehydrogenase (Complex I). Involved in mid-late stages of complex I assembly. The polypeptide is FAD-dependent oxidoreductase domain-containing protein 1 (foxred1) (Xenopus laevis (African clawed frog)).